A 419-amino-acid polypeptide reads, in one-letter code: Peptide chain release factor subunit 1 (419 aa).

This sequence belongs to the eukaryotic release factor 1 family. In terms of assembly, heterodimer of two subunits, one of which binds GTP.

The protein localises to the cytoplasm. Directs the termination of nascent peptide synthesis (translation) in response to the termination codons UAA, UAG and UGA. The chain is Peptide chain release factor subunit 1 from Methanococcus vannielii (strain ATCC 35089 / DSM 1224 / JCM 13029 / OCM 148 / SB).